An 85-amino-acid chain; its full sequence is Cell division topological specificity factor (85 aa).

The protein belongs to the MinE family.

In terms of biological role, prevents the cell division inhibition by proteins MinC and MinD at internal division sites while permitting inhibition at polar sites. This ensures cell division at the proper site by restricting the formation of a division septum at the midpoint of the long axis of the cell. This chain is Cell division topological specificity factor, found in Deinococcus geothermalis (strain DSM 11300 / CIP 105573 / AG-3a).